The sequence spans 144 residues: Single-stranded DNA-binding protein 3 (144 aa).

Residues 1–103 (MNKVVLIGRL…IVAEEVQFLE (103 aa)) form the SSB domain. A compositionally biased stretch (polar residues) spans 112 to 134 (MANDQFNNGNENGSMQLPDNNDI). A disordered region spans residues 112–144 (MANDQFNNGNENGSMQLPDNNDITPIDDGDIPF).

As to quaternary structure, homotetramer.

This Clostridium acetobutylicum (strain ATCC 824 / DSM 792 / JCM 1419 / IAM 19013 / LMG 5710 / NBRC 13948 / NRRL B-527 / VKM B-1787 / 2291 / W) protein is Single-stranded DNA-binding protein 3 (ssb3).